A 296-amino-acid polypeptide reads, in one-letter code: 33 kDa chaperonin (296 aa).

2 disulfide bridges follow: C238–C240 and C271–C274.

It belongs to the HSP33 family. Under oxidizing conditions two disulfide bonds are formed involving the reactive cysteines. Under reducing conditions zinc is bound to the reactive cysteines and the protein is inactive.

It is found in the cytoplasm. Functionally, redox regulated molecular chaperone. Protects both thermally unfolding and oxidatively damaged proteins from irreversible aggregation. Plays an important role in the bacterial defense system toward oxidative stress. This Clostridium botulinum (strain Okra / Type B1) protein is 33 kDa chaperonin.